The chain runs to 469 residues: tRNA modification GTPase MnmE (469 aa).

Residues arginine 38, glutamate 95, and arginine 134 each contribute to the (6S)-5-formyl-5,6,7,8-tetrahydrofolate site. A TrmE-type G domain is found at 230–392 (GIRVALVGPP…LRRGLAALVD (163 aa)). Residues 240 to 245 (NAGKSS), 259 to 265 (SAQAGTT), and 284 to 287 (DTAG) each bind GTP. Mg(2+) is bound by residues serine 244 and threonine 265. Residue lysine 468 participates in (6S)-5-formyl-5,6,7,8-tetrahydrofolate binding.

It belongs to the TRAFAC class TrmE-Era-EngA-EngB-Septin-like GTPase superfamily. TrmE GTPase family. As to quaternary structure, homodimer. Heterotetramer of two MnmE and two MnmG subunits. K(+) is required as a cofactor.

It localises to the cytoplasm. Its function is as follows. Exhibits a very high intrinsic GTPase hydrolysis rate. Involved in the addition of a carboxymethylaminomethyl (cmnm) group at the wobble position (U34) of certain tRNAs, forming tRNA-cmnm(5)s(2)U34. This chain is tRNA modification GTPase MnmE, found in Halorhodospira halophila (strain DSM 244 / SL1) (Ectothiorhodospira halophila (strain DSM 244 / SL1)).